Reading from the N-terminus, the 141-residue chain is Cystatin-SN (141 aa).

The signal sequence occupies residues 1 to 20; the sequence is MAQYLSTLLLLLATLAVALA. The Secondary area of contact motif lies at 76–80; that stretch reads QTVGG. Intrachain disulfides connect Cys94/Cys104 and Cys118/Cys138.

The protein belongs to the cystatin family. Expressed in submandibular and sublingual saliva but not in parotid saliva (at protein level). Expressed in saliva, tears, urine and seminal fluid.

The protein resides in the secreted. Human saliva appears to contain several cysteine proteinase inhibitors that are immunologically related to cystatin S but that differ in their specificity due to amino acid sequence differences. Cystatin SN, with a pI of 7.5, is a much better inhibitor of papain and dipeptidyl peptidase I than is cystatin S, although both inhibit ficin equally well. The protein is Cystatin-SN (CST1) of Homo sapiens (Human).